A 1040-amino-acid polypeptide reads, in one-letter code: Desmoglein-4 (1040 aa).

The first 23 residues, 1–23, serve as a signal peptide directing secretion; that stretch reads MDWLLFRNICLLILFMVVLGVNS. A propeptide spanning residues 24–49 is cleaved from the precursor; it reads EFIVEVKELDIENGTTTWQTVRRQKR. 4 Cadherin domains span residues 50–157, 158–269, 270–385, and 389–497; these read EWIK…PPVF, TQNV…FPIL, EKTS…GPTF, and SMTF…CPVI. Residues 50 to 633 lie on the Extracellular side of the membrane; sequence EWIKFAAACR…RQSNVGLGPA (584 aa). Asn110 carries an N-linked (GlcNAc...) asparagine glycan. A glycan (N-linked (GlcNAc...) asparagine) is linked at Asn545. The chain crosses the membrane as a helical span at residues 634–654; that stretch reads GIGMIILGLLLLFLSPLLLLM. At 655–1040 the chain is on the cytoplasmic side; sequence CCCKRRQPEG…RYSNIHYSRQ (386 aa). Desmoglein repeat repeat units lie at residues 883-909 and 910-940; these read TLSE…IVTE and TYTA…ETVM. Residues 1015-1040 form a disordered region; sequence QTTRSTSPMTSQHRVTRYSNIHYSRQ.

Interacts with JUP.

It is found in the cell membrane. The protein localises to the cell junction. The protein resides in the desmosome. Its function is as follows. A component of desmosome cell-cell junctions which are required for positive regulation of cellular adhesion. Coordinates the transition from proliferation to differentiation in hair follicle keratinocytes. Plays a role in moderating lymphocyte migration to inflamed skin and maintaining homeostasis of the epidermal inflammatory response. This is Desmoglein-4 (Dsg4) from Rattus norvegicus (Rat).